Here is a 461-residue protein sequence, read N- to C-terminus: Asparagine--tRNA ligase (461 aa).

Belongs to the class-II aminoacyl-tRNA synthetase family. Homodimer.

It localises to the cytoplasm. The enzyme catalyses tRNA(Asn) + L-asparagine + ATP = L-asparaginyl-tRNA(Asn) + AMP + diphosphate + H(+). This Nitratidesulfovibrio vulgaris (strain ATCC 29579 / DSM 644 / CCUG 34227 / NCIMB 8303 / VKM B-1760 / Hildenborough) (Desulfovibrio vulgaris) protein is Asparagine--tRNA ligase.